The primary structure comprises 119 residues: Protein GSKIP homolog (119 aa).

The protein belongs to the GSKIP family.

In Drosophila melanogaster (Fruit fly), this protein is Protein GSKIP homolog.